The primary structure comprises 267 residues: L-aspartate dehydrogenase (267 aa).

Positions 124 and 190 each coordinate NAD(+). H218 is an active-site residue.

It belongs to the L-aspartate dehydrogenase family.

It carries out the reaction L-aspartate + NADP(+) + H2O = oxaloacetate + NH4(+) + NADPH + H(+). It catalyses the reaction L-aspartate + NAD(+) + H2O = oxaloacetate + NH4(+) + NADH + H(+). It functions in the pathway cofactor biosynthesis; NAD(+) biosynthesis; iminoaspartate from L-aspartate (dehydrogenase route): step 1/1. Functionally, specifically catalyzes the NAD or NADP-dependent dehydrogenation of L-aspartate to iminoaspartate. The protein is L-aspartate dehydrogenase of Methanococcus maripaludis (strain DSM 14266 / JCM 13030 / NBRC 101832 / S2 / LL).